The following is a 192-amino-acid chain: dTTP/UTP pyrophosphatase (192 aa).

The active-site Proton acceptor is the Asp71.

This sequence belongs to the Maf family. YhdE subfamily. A divalent metal cation serves as cofactor.

The protein resides in the cytoplasm. The catalysed reaction is dTTP + H2O = dTMP + diphosphate + H(+). The enzyme catalyses UTP + H2O = UMP + diphosphate + H(+). Its function is as follows. Nucleoside triphosphate pyrophosphatase that hydrolyzes dTTP and UTP. May have a dual role in cell division arrest and in preventing the incorporation of modified nucleotides into cellular nucleic acids. The chain is dTTP/UTP pyrophosphatase from Pseudoalteromonas atlantica (strain T6c / ATCC BAA-1087).